The primary structure comprises 222 residues: Adenylate kinase (222 aa).

16-21 (GAGKGT) is a binding site for ATP. The tract at residues 36-65 (ATGDMLRSQISKGTELGLQAKKIMDQGGLV) is NMP. Residues Thr37, Arg42, 63–65 (GLV), 92–95 (GFPR), and Gln99 contribute to the AMP site. The tract at residues 133–170 (GRLIHPASGRSYHKLFNPPKEDMKDDVTGEPLVQRSDD) is LID. Residues Arg134 and 143–144 (SY) each bind ATP. AMP contacts are provided by Arg167 and Arg178. Gln206 contributes to the ATP binding site.

This sequence belongs to the adenylate kinase family. AK2 subfamily. As to quaternary structure, monomer.

It localises to the cytoplasm. Its subcellular location is the cytosol. The protein resides in the mitochondrion intermembrane space. The enzyme catalyses AMP + ATP = 2 ADP. Its function is as follows. Catalyzes the reversible transfer of the terminal phosphate group between ATP and AMP. Plays an important role in cellular energy homeostasis and in adenine nucleotide metabolism. Adenylate kinase activity is critical for regulation of the phosphate utilization and the AMP de novo biosynthesis pathways. This chain is Adenylate kinase, found in Candida glabrata (strain ATCC 2001 / BCRC 20586 / JCM 3761 / NBRC 0622 / NRRL Y-65 / CBS 138) (Yeast).